A 161-amino-acid chain; its full sequence is uncharacterized protein (161 aa).

An N-terminal signal peptide occupies residues 1 to 35; that stretch reads MVMAMGFDTVVAAIMATAIIVAVAYTFLAGSTSIA.

This is an uncharacterized protein from Archaeoglobus fulgidus (strain ATCC 49558 / DSM 4304 / JCM 9628 / NBRC 100126 / VC-16).